The sequence spans 271 residues: 2,3,4,5-tetrahydropyridine-2,6-dicarboxylate N-succinyltransferase (271 aa).

The substrate site is built by Arg-102 and Asp-139.

The protein belongs to the transferase hexapeptide repeat family. In terms of assembly, homotrimer.

Its subcellular location is the cytoplasm. It carries out the reaction (S)-2,3,4,5-tetrahydrodipicolinate + succinyl-CoA + H2O = (S)-2-succinylamino-6-oxoheptanedioate + CoA. It functions in the pathway amino-acid biosynthesis; L-lysine biosynthesis via DAP pathway; LL-2,6-diaminopimelate from (S)-tetrahydrodipicolinate (succinylase route): step 1/3. The chain is 2,3,4,5-tetrahydropyridine-2,6-dicarboxylate N-succinyltransferase from Coxiella burnetii (strain Dugway 5J108-111).